A 537-amino-acid polypeptide reads, in one-letter code: Glutamyl-tRNA(Gln) amidotransferase subunit A, chloroplastic/mitochondrial (537 aa).

Active-site charge relay system residues include lysine 116 and serine 191. Serine 215 functions as the Acyl-ester intermediate in the catalytic mechanism.

The protein belongs to the amidase family. GatA subfamily. Subunit of the heterotrimeric GatCAB amidotransferase (AdT) complex, composed of A, B and C subunits.

It is found in the mitochondrion. Its subcellular location is the plastid. The protein resides in the chloroplast stroma. The enzyme catalyses L-glutamyl-tRNA(Gln) + L-glutamine + ATP + H2O = L-glutaminyl-tRNA(Gln) + L-glutamate + ADP + phosphate + H(+). In terms of biological role, allows the formation of correctly charged Gln-tRNA(Gln) through the transamidation of misacylated Glu-tRNA(Gln) in chloroplasts and mitochondria. The reaction takes place in the presence of glutamine and ATP through an activated gamma-phospho-Glu-tRNA(Gln). In Arabidopsis thaliana (Mouse-ear cress), this protein is Glutamyl-tRNA(Gln) amidotransferase subunit A, chloroplastic/mitochondrial.